The primary structure comprises 278 residues: HTH-type transcriptional regulator HdfR (278 aa).

The region spanning 1–58 is the HTH lysR-type domain; it reads MDTELLKTFLEVSRTRHFGRAAEALYLTQSAVSFRIRQLENQLGVNLFTRHRNNIRLT. A DNA-binding region (H-T-H motif) is located at residues 18–37; it reads FGRAAEALYLTQSAVSFRIR.

Belongs to the LysR transcriptional regulatory family.

In terms of biological role, negatively regulates the transcription of the flagellar master operon flhDC by binding to the upstream region of the operon. The chain is HTH-type transcriptional regulator HdfR from Salmonella agona (strain SL483).